Here is a 308-residue protein sequence, read N- to C-terminus: Probable peptidyl-prolyl cis-trans isomerase B (308 aa).

The segment at 74 to 123 is disordered; that stretch reads DHQSTTSATPTDSASTSPPQAATAPPLPPFKPSANLGANCQYPPSPDKAV. Residues 77–97 are compositionally biased toward low complexity; the sequence is STTSATPTDSASTSPPQAATA. In terms of domain architecture, PPIase cyclophilin-type spans 139 to 307; that stretch reads AQVSVSMVTN…TEVTITSVLL (169 aa).

Belongs to the cyclophilin-type PPIase family.

It carries out the reaction [protein]-peptidylproline (omega=180) = [protein]-peptidylproline (omega=0). Functionally, PPIases accelerate the folding of proteins. It catalyzes the cis-trans isomerization of proline imidic peptide bonds in oligopeptides. In Mycobacterium tuberculosis (strain CDC 1551 / Oshkosh), this protein is Probable peptidyl-prolyl cis-trans isomerase B (ppiB).